We begin with the raw amino-acid sequence, 307 residues long: Acetyl-coenzyme A carboxylase carboxyl transferase subunit beta (307 aa).

The disordered stretch occupies residues 1–26 (MAMAEPQDPKKGDKKTAERRGGGWLS). Positions 7–21 (QDPKKGDKKTAERRG) are enriched in basic and acidic residues. One can recognise a CoA carboxyltransferase N-terminal domain in the interval 45 to 307 (LWVKCPDTGE…LMMGRKRQAA (263 aa)).

Belongs to the AccD/PCCB family. Acetyl-CoA carboxylase is a heterohexamer composed of biotin carboxyl carrier protein (AccB), biotin carboxylase (AccC) and two subunits each of ACCase subunit alpha (AccA) and ACCase subunit beta (AccD).

It localises to the cytoplasm. The enzyme catalyses N(6)-carboxybiotinyl-L-lysyl-[protein] + acetyl-CoA = N(6)-biotinyl-L-lysyl-[protein] + malonyl-CoA. Its pathway is lipid metabolism; malonyl-CoA biosynthesis; malonyl-CoA from acetyl-CoA: step 1/1. Functionally, component of the acetyl coenzyme A carboxylase (ACC) complex. Biotin carboxylase (BC) catalyzes the carboxylation of biotin on its carrier protein (BCCP) and then the CO(2) group is transferred by the transcarboxylase to acetyl-CoA to form malonyl-CoA. This Caulobacter vibrioides (strain ATCC 19089 / CIP 103742 / CB 15) (Caulobacter crescentus) protein is Acetyl-coenzyme A carboxylase carboxyl transferase subunit beta.